Here is a 54-residue protein sequence, read N- to C-terminus: QDKCKKVYENYPVSKCQLANQCNYDCKLDKHARSGECFYDEKRNLQCICDYCEY.

At glutamine 1 the chain carries Pyrrolidone carboxylic acid. Cystine bridges form between cysteine 4–cysteine 52, cysteine 16–cysteine 37, cysteine 22–cysteine 47, and cysteine 26–cysteine 49.

Belongs to the DEFL family. As to quaternary structure, monomer.

The protein resides in the secreted. Functionally, taste-modifying protein; sweet-tasting. It is 2000 sweeter than sucrose on a molar basis. Its function is as follows. Has a pH-specific antimicrobial activity against bacteria (B.subtilis, E.coli and S.aureus) and the fungus C.albicans. The protein is Defensin-like protein of Pentadiplandra brazzeana.